Here is an 876-residue protein sequence, read N- to C-terminus: Alanine--tRNA ligase (876 aa).

Zn(2+)-binding residues include histidine 560, histidine 564, cysteine 662, and histidine 666.

The protein belongs to the class-II aminoacyl-tRNA synthetase family. Zn(2+) serves as cofactor.

Its subcellular location is the cytoplasm. The enzyme catalyses tRNA(Ala) + L-alanine + ATP = L-alanyl-tRNA(Ala) + AMP + diphosphate. Catalyzes the attachment of alanine to tRNA(Ala) in a two-step reaction: alanine is first activated by ATP to form Ala-AMP and then transferred to the acceptor end of tRNA(Ala). Also edits incorrectly charged Ser-tRNA(Ala) and Gly-tRNA(Ala) via its editing domain. The protein is Alanine--tRNA ligase of Synechococcus elongatus (strain ATCC 33912 / PCC 7942 / FACHB-805) (Anacystis nidulans R2).